We begin with the raw amino-acid sequence, 480 residues long: Serine/threonine-protein kinase WAG2 (480 aa).

Positions 88–396 (LKLIRHLGTG…AQDIKRHPFF (309 aa)) constitute a Protein kinase domain. Residues 94–102 (LGTGNLGRV) and K117 contribute to the ATP site. D213 serves as the catalytic Proton acceptor.

The protein belongs to the protein kinase superfamily. Ser/Thr protein kinase family. In terms of tissue distribution, expressed in root tips, lateral root primordia and emerging true leaf primordia.

It is found in the cytoplasm. Its subcellular location is the cytosol. The catalysed reaction is L-seryl-[protein] + ATP = O-phospho-L-seryl-[protein] + ADP + H(+). It carries out the reaction L-threonyl-[protein] + ATP = O-phospho-L-threonyl-[protein] + ADP + H(+). In terms of biological role, serine/threonine-protein kinase involved in the regulation of auxin signaling. Acts as a positive regulator of cellular auxin efflux and regulates organ development by enhancing PIN-mediated polar auxin transport. Phosphorylates conserved serine residues in the PIN auxin efflux carriers. Phosphorylation of PIN proteins is required and sufficient for apical-basal PIN polarity that enables directional intercellular auxin fluxes, which mediate differential growth, tissue patterning and organogenesis. Acts as a suppressor of root waving. The sequence is that of Serine/threonine-protein kinase WAG2 (WAG2) from Arabidopsis thaliana (Mouse-ear cress).